The following is a 341-amino-acid chain: CRISPR-associated endonuclease Cas1 (341 aa).

Mn(2+) is bound by residues E173, H242, and E257.

This sequence belongs to the CRISPR-associated endonuclease Cas1 family. Homodimer, forms a heterotetramer with a Cas2 homodimer. Requires Mg(2+) as cofactor. Mn(2+) serves as cofactor.

In terms of biological role, CRISPR (clustered regularly interspaced short palindromic repeat), is an adaptive immune system that provides protection against mobile genetic elements (viruses, transposable elements and conjugative plasmids). CRISPR clusters contain spacers, sequences complementary to antecedent mobile elements, and target invading nucleic acids. CRISPR clusters are transcribed and processed into CRISPR RNA (crRNA). Acts as a dsDNA endonuclease. Involved in the integration of spacer DNA into the CRISPR cassette. This is CRISPR-associated endonuclease Cas1 from Korarchaeum cryptofilum (strain OPF8).